Reading from the N-terminus, the 367-residue chain is Biotin--protein ligase 1, chloroplastic (367 aa).

A chloroplast-targeting transit peptide spans 1–37 (MEAVRSTTTLSNFHLLNILVLRSLKPLHRLSFSFSAS). The BPL/LPL catalytic domain occupies 105-289 (IITHRFGRFL…KFEKFFDLFM (185 aa)). Biotin contacts are provided by residues 122–124 (STH), Gln-145, 149–151 (RGR), and Lys-220.

This sequence belongs to the biotin--protein ligase family. Expressed in roots, leaves, stems, flowers, siliques and seeds.

The protein resides in the plastid. It localises to the chloroplast. The protein localises to the cytoplasm. It is found in the cytosol. It carries out the reaction apo-[3-methylcrotonoyl-CoA:carbon-dioxide ligase (ADP-forming)] + biotin + ATP = holo-[3-methylcrotonoyl-CoA:carbon-dioxide ligase (ADP-forming)] + AMP + diphosphate + H(+). The enzyme catalyses biotin + L-lysyl-[protein] + ATP = N(6)-biotinyl-L-lysyl-[protein] + AMP + diphosphate + H(+). Plays a major role in biotin-dependent carboxylase biotinylation. Catalyzes the addition of biotin to the biotin carboxyl carrier protein (BCCP) subunit of acetyl-CoA carboxylase. Can also biotinylate methylcrotonyl-CoA carboxylase. Is responsible for most, if not all, biotin--protein ligase activity in Arabidopsis. Is essential for plant viability and required for ovule development. This Arabidopsis thaliana (Mouse-ear cress) protein is Biotin--protein ligase 1, chloroplastic.